We begin with the raw amino-acid sequence, 444 residues long: P2X purinoceptor 5 (444 aa).

At 1-30 the chain is on the cytoplasmic side; that stretch reads MGQAGCKGLCLSLFDYKTEKYVIAKNKKVG. A helical transmembrane segment spans residues 31-51; it reads LLYRLLQASILAYLVVWVFLI. Topologically, residues 52-319 are extracellular; sequence KKGYQDVDTS…RTLMKAYGIR (268 aa). An N-linked (GlcNAc...) asparagine glycan is attached at Asn-77. Cystine bridges form between Cys-118/Cys-169, Cys-129/Cys-152, and Cys-135/Cys-163. Residue Asn-202 is glycosylated (N-linked (GlcNAc...) asparagine). 2 cysteine pairs are disulfide-bonded: Cys-220–Cys-229 and Cys-263–Cys-272. The chain crosses the membrane as a helical span at residues 320–362; sequence FDVMVNGKAGKFSIIPTIINVGSGVALMGAGAFFCDLVLIYLI. The Cytoplasmic segment spans residues 363–444; it reads KKREFYRDKK…PQLLEPHRST (82 aa). Residues 378–444 are disordered; the sequence is GLEDSSQEAE…PQLLEPHRST (67 aa).

It belongs to the P2X receptor family. As to quaternary structure, functional P2XRs are organized as homomeric and heteromeric trimers. Homotrimer. Forms heterotrimer with P2RX1. As to expression, expressed at high levels in brain and immune system.

Its subcellular location is the cell membrane. It carries out the reaction Na(+)(in) = Na(+)(out). The enzyme catalyses Ca(2+)(in) = Ca(2+)(out). The catalysed reaction is chloride(in) = chloride(out). With respect to regulation, activated by ATP. Slowly desensitizing. Sensitive to the ATP agonist alpha/beta-methylene-ATP. In terms of biological role, ATP-gated nonselective transmembrane cation channel permeable to potassium, sodium and calcium. Unlike other P2RX receptors, the P2X5 receptor is also permeable to chloride. May play a supporting role in the inflammatory response. Its function is as follows. Non-functional. The chain is P2X purinoceptor 5 from Homo sapiens (Human).